The sequence spans 66 residues: Large ribosomal subunit protein uL29 (66 aa).

It belongs to the universal ribosomal protein uL29 family.

The polypeptide is Large ribosomal subunit protein uL29 (Bartonella tribocorum (strain CIP 105476 / IBS 506)).